We begin with the raw amino-acid sequence, 382 residues long: Nonsense-mediated mRNA decay factor SMG9 (382 aa).

The disordered stretch occupies residues 1 to 66; that stretch reads MKKVEILKTP…PDSSVSKSSG (66 aa).

This sequence belongs to the SMG9 family.

Involved in nonsense-mediated decay (NMD) of mRNAs containing premature stop codons. Probable component of kinase complex containing smg-1 and recruited to stalled ribosomes. This chain is Nonsense-mediated mRNA decay factor SMG9 (smg-9), found in Caenorhabditis briggsae.